A 312-amino-acid chain; its full sequence is Glyoxylate/hydroxypyruvate reductase A (312 aa).

Arg227 is an active-site residue. His275 acts as the Proton donor in catalysis.

Belongs to the D-isomer specific 2-hydroxyacid dehydrogenase family. GhrA subfamily.

The protein resides in the cytoplasm. The catalysed reaction is glycolate + NADP(+) = glyoxylate + NADPH + H(+). The enzyme catalyses (R)-glycerate + NAD(+) = 3-hydroxypyruvate + NADH + H(+). It catalyses the reaction (R)-glycerate + NADP(+) = 3-hydroxypyruvate + NADPH + H(+). In terms of biological role, catalyzes the NADPH-dependent reduction of glyoxylate and hydroxypyruvate into glycolate and glycerate, respectively. This Salmonella typhi protein is Glyoxylate/hydroxypyruvate reductase A.